The primary structure comprises 441 residues: Carbohydrate sulfotransferase 3 (441 aa).

Residues 1–4 (MKMR) lie on the Cytoplasmic side of the membrane. Residues 5 to 21 (SKYAIILFFVVALVIIE) traverse the membrane as a helical; Signal-anchor for type II membrane protein segment. Residues 22–441 (KERNIISRVS…LLENRNFWIT (420 aa)) are Lumenal-facing. 2 N-linked (GlcNAc...) asparagine glycosylation sites follow: asparagine 47 and asparagine 58. Residue 106–112 (TRTGSSF) coordinates 3'-phosphoadenylyl sulfate. Asparagine 221 is a glycosylation site (N-linked (GlcNAc...) asparagine). 266–274 (RDPRAVLAS) contributes to the 3'-phosphoadenylyl sulfate binding site. Residue asparagine 427 is glycosylated (N-linked (GlcNAc...) asparagine).

The protein belongs to the sulfotransferase 1 family. Gal/GlcNAc/GalNAc subfamily. In terms of processing, N-glycosylated. As to expression, in electric organ, it is moderately expressed in spinal cord and electric lobe and undetectable in non-neural tissues. Expressed in a punctate distribution in the innervated portion of electrocytes. In the CNS, it is localized within the somas of motor neurons and neurons of the electromotor nucleus.

The protein localises to the golgi apparatus membrane. The catalysed reaction is chondroitin beta-D-glucuronate + n 3'-phosphoadenylyl sulfate = chondroitin 6'-sulfate + n adenosine 3',5'-bisphosphate + n H(+). It carries out the reaction 3'-phosphoadenylyl sulfate + keratan = adenosine 3',5'-bisphosphate + keratan 6'-sulfate.. In terms of biological role, sulfotransferase that utilizes 3'-phospho-5'-adenylyl sulfate (PAPS) as sulfonate donor to catalyze the transfer of sulfate to position 6 of the N-acetylgalactosamine (GalNAc) residue of chondroitin. Chondroitin sulfate constitutes the predominant proteoglycan present in cartilage and is distributed on the surfaces of many cells and extracellular matrices. Catalyzes with a lower efficiency the sulfation of Gal residues of keratan sulfate, another glycosaminoglycan. Can also catalyze the sulfation of the Gal residues in sialyl N-acetyllactosamine (sialyl LacNAc) oligosaccharides. This Tetronarce californica (Pacific electric ray) protein is Carbohydrate sulfotransferase 3 (CHST3).